The chain runs to 256 residues: GTP cyclohydrolase FolE2 (256 aa).

This sequence belongs to the GTP cyclohydrolase IV family.

The catalysed reaction is GTP + H2O = 7,8-dihydroneopterin 3'-triphosphate + formate + H(+). It participates in cofactor biosynthesis; 7,8-dihydroneopterin triphosphate biosynthesis; 7,8-dihydroneopterin triphosphate from GTP: step 1/1. In terms of biological role, converts GTP to 7,8-dihydroneopterin triphosphate. This Caldicellulosiruptor saccharolyticus (strain ATCC 43494 / DSM 8903 / Tp8T 6331) protein is GTP cyclohydrolase FolE2.